The primary structure comprises 142 residues: Putative pre-16S rRNA nuclease (142 aa).

The protein belongs to the YqgF nuclease family.

It is found in the cytoplasm. Could be a nuclease involved in processing of the 5'-end of pre-16S rRNA. The chain is Putative pre-16S rRNA nuclease from Azotobacter vinelandii (strain DJ / ATCC BAA-1303).